Reading from the N-terminus, the 412-residue chain is Class E basic helix-loop-helix protein 40 (412 aa).

A disordered region spans residues 1-21 (MERIPSAQPPPTCLPKAPGLE). An essential for interaction with BMAL1, E-box binding and repressor activity against the CLOCK-BMAL1 heterodimer region spans residues 1 to 139 (MERIPSAQPP…LSGRNVEAGQ (139 aa)). Residues 52-107 (TYKLPHRLIEKKRRDRINECIAQLKDLLPEHLKLTTLGHLEKAVVLELTLKHVKAL) form the bHLH domain. The segment at 75-79 (LKDLL) is necessary for interaction with RXRA and repressor activity against RXRA. The Orange domain maps to 142–175 (FCSGFQTCAREVLQYLAKHENTRDLKSSQLVTHL). A Glycyl lysine isopeptide (Lys-Gly) (interchain with G-Cter in SUMO1, SUMO2 and SUMO3) cross-link involves residue Lys-159. Lys-167 is covalently cross-linked (Glycyl lysine isopeptide (Lys-Gly) (interchain with G-Cter in SUMO2)). Disordered regions lie at residues 182–257 (LLQG…LRVE) and 279–298 (KQES…SDDE). Phosphoserine is present on Ser-235. A compositionally biased stretch (basic and acidic residues) spans 248 to 257 (ESEKSELRVE). Lys-279 participates in a covalent cross-link: Glycyl lysine isopeptide (Lys-Gly) (interchain with G-Cter in SUMO1); alternate. Lys-279 participates in a covalent cross-link: Glycyl lysine isopeptide (Lys-Gly) (interchain with G-Cter in SUMO1, SUMO2 and SUMO3); alternate. Lys-279 participates in a covalent cross-link: Glycyl lysine isopeptide (Lys-Gly) (interchain with G-Cter in SUMO2); alternate. A Glycyl lysine isopeptide (Lys-Gly) (interchain with G-Cter in SUMO2) cross-link involves residue Lys-288. Ser-383 is subject to Phosphoserine.

In terms of assembly, homodimer. Heterodimer with BHLHE41/DEC2. Interacts with TCF3/E47. Interacts with ubiquitin-conjugating enzyme UBE2I/UBC9. Interacts with HDAC1, SUMO1, RXRA and BMAL1. In terms of processing, ubiquitinated; which may lead to proteasomal degradation. Sumoylation inhibits its ubiquitination and promotes its negative regulation of the CLOCK-BMAL1 heterodimer transcriptional activator activity.

It is found in the cytoplasm. It localises to the nucleus. Functionally, transcriptional repressor involved in the regulation of the circadian rhythm by negatively regulating the activity of the clock genes and clock-controlled genes. Acts as the negative limb of a novel autoregulatory feedback loop (DEC loop) which differs from the one formed by the PER and CRY transcriptional repressors (PER/CRY loop). Both these loops are interlocked as it represses the expression of PER1/2 and in turn is repressed by PER1/2 and CRY1/2. Represses the activity of the circadian transcriptional activator: CLOCK-BMAL1|BMAL2 heterodimer by competing for the binding to E-box elements (5'-CACGTG-3') found within the promoters of its target genes. Negatively regulates its own expression and the expression of DBP and BHLHE41/DEC2. Acts as a corepressor of RXR and the RXR-LXR heterodimers and represses the ligand-induced RXRA and NR1H3/LXRA transactivation activity. May be involved in the regulation of chondrocyte differentiation via the cAMP pathway. Represses the transcription of NR0B2 and attentuates the transactivation of NR0B2 by the CLOCK-BMAL1 complex. Drives the circadian rhythm of blood pressure through transcriptional repression of ATP1B1 in the cardiovascular system. The polypeptide is Class E basic helix-loop-helix protein 40 (BHLHE40) (Ovis aries (Sheep)).